The chain runs to 302 residues: Protoheme IX farnesyltransferase 2 (302 aa).

The next 9 helical transmembrane spans lie at 14 to 34, 36 to 56, 85 to 105, 108 to 128, 133 to 153, 163 to 183, 209 to 229, 230 to 250, and 264 to 284; these read IIFG…QGSV, WWLL…GCAI, AALA…WFCT, LATG…SLYM, VYGT…GYCA, AILL…IAIF, IVLY…GGYA, GYGY…MALS, and QVFF…AVDG.

Belongs to the UbiA prenyltransferase family. Protoheme IX farnesyltransferase subfamily.

Its subcellular location is the cell inner membrane. The enzyme catalyses heme b + (2E,6E)-farnesyl diphosphate + H2O = Fe(II)-heme o + diphosphate. It functions in the pathway porphyrin-containing compound metabolism; heme O biosynthesis; heme O from protoheme: step 1/1. In terms of biological role, converts heme B (protoheme IX) to heme O by substitution of the vinyl group on carbon 2 of heme B porphyrin ring with a hydroxyethyl farnesyl side group. This chain is Protoheme IX farnesyltransferase 2, found in Chromobacterium violaceum (strain ATCC 12472 / DSM 30191 / JCM 1249 / CCUG 213 / NBRC 12614 / NCIMB 9131 / NCTC 9757 / MK).